The primary structure comprises 877 residues: Protein SEY1 homolog (877 aa).

The Cytoplasmic portion of the chain corresponds to 1–735; sequence MVAFAGGART…LRSIEGEKQN (735 aa). Residues 49 to 307 form the GB1/RHD3-type G domain; it reads GITYHVVGVL…VPLDGIPSYL (259 aa). 59 to 66 contributes to the GTP binding site; it reads GGQSSGKS. A coiled-coil region spans residues 388–410; the sequence is RIDIVRKTEAELEEELLKVELKL. Residues 736–756 traverse the membrane as a helical segment; the sequence is LPAWVLPVLLLLGWNEIWYVL. Topologically, residues 757-759 are lumenal; sequence SSP. A helical membrane pass occupies residues 760-780; that stretch reads VLLVVVVIIAAVFLRGFLLTQ. The Cytoplasmic portion of the chain corresponds to 781–877; that stretch reads WAIFEETGPT…KEEEVPTQKE (97 aa). Residues 850 to 877 form a disordered region; sequence PTVLPPSTTSATLTRRLKKEEEVPTQKE. Residues 867 to 877 are compositionally biased toward basic and acidic residues; that stretch reads KKEEEVPTQKE.

This sequence belongs to the TRAFAC class dynamin-like GTPase superfamily. GB1/RHD3 GTPase family. RHD3 subfamily.

It localises to the endoplasmic reticulum membrane. Its function is as follows. Probable GTP-binding protein that may be involved in cell development. The protein is Protein SEY1 homolog of Trypanosoma cruzi (strain CL Brener).